The sequence spans 1008 residues: MLLQSLFAWALAIGPCIAQNSTNSTWPIHNNGLTTQVEWDHYSLMVDGQRFFLWSGEFHYWRIPVPELWVDVLQKVKAAGFNTFAIYTHWYFHNPNPNTLDFENAAHNFTKIFDLAKELGMFVVFRPGPYVNAESNAGAFPLWLTTGAYGALRNNDERYTEAWTPFWEKVASIVAPYQFTNGGNVLTYQIENELGSQWRGTPSNKVPNLSSVEYMEALEASARAHGITIPFQANDPNLNSDSWSKDFYDGYGSVDIYGMDSYPACWTCNLTECDSTNGAYKAFNVIDYYDHFEAISPTQPSFLPEFQGGSFNPWGGPEGGCPENSPADFANLFYRNNVGQRVTAMSLYMIYGGTNWGWLAAPVVATSYDYSSPISENRMINDKYAETKLFGHFLRVAKDLTKTDRIGTGKTASTNPNVVYSEIRNPDTNAAFYVTIHKESTVGTREEFYINANTSKGAFKIPQKAASIVLNGFQSKIIVTDFNFGSHSLLYSTAEVLSHSIVDDQDILALWMPTGEAGEFVVTGAKSGSVSSCGGCSSVGFYPQGDDLLVTISQSKGISVLTFDDGLRVLVMDRSFAYEFWVPVLTADPFSPANETVFVQGPSLVRSAAYSSDGSTLDLTGDNNGTSTQIQVFPPKSVSKVTWNGQVITTEKTDYDSLIGSLTGPALDSLTLPTISGWKANDSLPERLPTYDDSWWVAADHMNTSNPTKPETLPVLYIDDYGYHVGNHLWRGRFEGSASGVYLSVTGGRAFGYSAWLNGEFIGSYLGAAYPDTGKLTLSFSNVTVNSNSTNILLVLQDNSGHDETSEALNPRGINNATLISSSTKNFTSWKVTGTAGKPDTAIDPVRGILSEGGLYAERLGWHLPDFDDSEWSSASPSNVSSSAGVTFYRTTVSLAIPTGLDVAISFTLKASPSNAALRVLLFVNGYQYGRFSPWIGNQVEFPVPPGILNYDGDNVIGLSVWRQEEGDESMGVNVGWKVTEAFASSFEPIFDAAYLQPGWTDERLQYA.

The signal sequence occupies residues 1-18; it reads MLLQSLFAWALAIGPCIA. N-linked (GlcNAc...) asparagine glycosylation is found at Asn-20 and Asn-23. Substrate is bound at residue Tyr-87. Asn-108 carries N-linked (GlcNAc...) asparagine glycosylation. The substrate site is built by Asn-132, Ala-133, Glu-134, and Asn-192. Glu-193 serves as the catalytic Proton donor. Asn-208 carries an N-linked (GlcNAc...) asparagine glycan. Tyr-262 is a substrate binding site. The cysteines at positions 268 and 321 are disulfide-linked. Asn-269 is a glycosylation site (N-linked (GlcNAc...) asparagine). The Nucleophile role is filled by Glu-305. Tyr-370 contacts substrate. Asn-453, Asn-594, Asn-624, Asn-681, Asn-703, Asn-782, Asn-788, Asn-816, Asn-826, and Asn-879 each carry an N-linked (GlcNAc...) asparagine glycan.

This sequence belongs to the glycosyl hydrolase 35 family.

The protein localises to the secreted. The enzyme catalyses Hydrolysis of terminal non-reducing beta-D-galactose residues in beta-D-galactosides.. Functionally, cleaves beta-linked terminal galactosyl residues from gangliosides, glycoproteins, and glycosaminoglycans. The chain is Probable beta-galactosidase B (lacB) from Sclerotinia sclerotiorum (strain ATCC 18683 / 1980 / Ss-1) (White mold).